Here is a 476-residue protein sequence, read N- to C-terminus: Bifunctional protein GlmU (476 aa).

Residues 1–235 (MTALDIIIMA…ALQVAGVNSP (235 aa)) are pyrophosphorylase. Residues K23, Q81, 86–87 (GT), 108–110 (SGD), G145, E160, and N233 contribute to the UDP-N-acetyl-alpha-D-glucosamine site. A Mg(2+)-binding site is contributed by D110. N233 contacts Mg(2+). The tract at residues 236 to 256 (AQLAELERAHQRAQAAALMEQ) is linker. Positions 257-476 (GVRLADPARF…WKRPAKQAKG (220 aa)) are N-acetyltransferase. Residues R351 and K369 each coordinate UDP-N-acetyl-alpha-D-glucosamine. Catalysis depends on H381, which acts as the Proton acceptor. Positions 384 and 395 each coordinate UDP-N-acetyl-alpha-D-glucosamine. Residues A398, 404–405 (NY), S423, G441, and R458 contribute to the acetyl-CoA site.

The protein in the N-terminal section; belongs to the N-acetylglucosamine-1-phosphate uridyltransferase family. It in the C-terminal section; belongs to the transferase hexapeptide repeat family. In terms of assembly, homotrimer. Mg(2+) is required as a cofactor.

Its subcellular location is the cytoplasm. The enzyme catalyses alpha-D-glucosamine 1-phosphate + acetyl-CoA = N-acetyl-alpha-D-glucosamine 1-phosphate + CoA + H(+). It catalyses the reaction N-acetyl-alpha-D-glucosamine 1-phosphate + UTP + H(+) = UDP-N-acetyl-alpha-D-glucosamine + diphosphate. The protein operates within nucleotide-sugar biosynthesis; UDP-N-acetyl-alpha-D-glucosamine biosynthesis; N-acetyl-alpha-D-glucosamine 1-phosphate from alpha-D-glucosamine 6-phosphate (route II): step 2/2. It functions in the pathway nucleotide-sugar biosynthesis; UDP-N-acetyl-alpha-D-glucosamine biosynthesis; UDP-N-acetyl-alpha-D-glucosamine from N-acetyl-alpha-D-glucosamine 1-phosphate: step 1/1. Its pathway is bacterial outer membrane biogenesis; LPS lipid A biosynthesis. Its function is as follows. Catalyzes the last two sequential reactions in the de novo biosynthetic pathway for UDP-N-acetylglucosamine (UDP-GlcNAc). The C-terminal domain catalyzes the transfer of acetyl group from acetyl coenzyme A to glucosamine-1-phosphate (GlcN-1-P) to produce N-acetylglucosamine-1-phosphate (GlcNAc-1-P), which is converted into UDP-GlcNAc by the transfer of uridine 5-monophosphate (from uridine 5-triphosphate), a reaction catalyzed by the N-terminal domain. In Acidovorax ebreus (strain TPSY) (Diaphorobacter sp. (strain TPSY)), this protein is Bifunctional protein GlmU.